The chain runs to 370 residues: MKTKLILLYGGKSAEHEVSLQTAFSVINALDLEKFEAEPIYITNEGEWVQGPLLSGKLDFVEQLRFSATDRVKLATAESEKSEGEAISPAVLEADGQETVVFPLLHGPNGEDGTVQGLFEVLNIPYVGNGVLASSAAMDKIVMKKIFADAGIPQVPAVAVRLIDWKNYQEEMVTEMEEVLTYPVFVKPANLGSSVGISKATNKTELIEAMTEAFLYDRRVVVEQGVVAREIEMGVLGNDTPVCSVPGEILPEGAVAKFYDYKAKYQDNNTALIIPTEVEPEILEQMKEYAVQAFLGLDASGLVRADFFLTEDNQLFLNEVNTMPGFTPYSMYPLLWQETGLPYGALIERLVDLAKERHAAKNALKYKLED.

In terms of domain architecture, ATP-grasp spans 144–352; the sequence is KKIFADAGIP…YGALIERLVD (209 aa). 177 to 232 is a binding site for ATP; that stretch reads EEVLTYPVFVKPANLGSSVGISKATNKTELIEAMTEAFLYDRRVVVEQGVVAREIE. Positions 306, 319, and 321 each coordinate Mg(2+).

It belongs to the D-alanine--D-alanine ligase family. Mg(2+) is required as a cofactor. The cofactor is Mn(2+).

Its subcellular location is the cytoplasm. It carries out the reaction 2 D-alanine + ATP = D-alanyl-D-alanine + ADP + phosphate + H(+). Its pathway is cell wall biogenesis; peptidoglycan biosynthesis. Functionally, cell wall formation. The sequence is that of D-alanine--D-alanine ligase from Listeria innocua serovar 6a (strain ATCC BAA-680 / CLIP 11262).